Consider the following 418-residue polypeptide: MYTYMEYLQKCFFHATRWNEDNIYSNITASSHALLEFLVPSGLKMDVSSRSSPNSASSFTLSNHHSLNGSLAYMYSSTQLKGTPGTRRIPLQDAIAGFKIVEPNEMRPSASGTIAPSSLLYGRMYFPGAALEAMVIRRFSPHTQLLIKCIHNPQLDKNGTLIAYFQKNTQRYSREVIYSTNDALVGFRGLYNIGSTPSWSPSPPNFDRSVVSVGAELWYAARTMSPGLSTGLRYSTRSTSTGKPLTMTLACNPILGHISSTYTVKTSVASTFCSRYDFNLFSYASNLSLGFELFNFDKNAAVERNPQLPTPTTNPSASKQNLINPIRDHSYYQTTPSTNATTYQSSQTISDSFQKLVNRSEFSSVVKVSTSLNDRLVRLLWEGRFKDFLVSSGVKVSLNPATNAVELNRFGISFSYAS.

Belongs to the MDM10 family. Component of the ER-mitochondria encounter structure (ERMES) or MDM complex, composed of MMM1, MDM10, MDM12 and MDM34. Associates with the mitochondrial outer membrane sorting assembly machinery SAM(core) complex.

The protein localises to the mitochondrion outer membrane. In terms of biological role, component of the ERMES/MDM complex, which serves as a molecular tether to connect the endoplasmic reticulum and mitochondria. Components of this complex are involved in the control of mitochondrial shape and protein biogenesis and may function in phospholipid exchange. MDM10 is involved in the late assembly steps of the general translocase of the mitochondrial outer membrane (TOM complex). Functions in the TOM40-specific route of the assembly of outer membrane beta-barrel proteins, including the association of TOM40 with the receptor TOM22 and small TOM proteins. Can associate with the SAM(core) complex as well as the MDM12-MMM1 complex, both involved in late steps of the major beta-barrel assembly pathway, that is responsible for biogenesis of all outer membrane beta-barrel proteins. May act as a switch that shuttles between both complexes and channels precursor proteins into the TOM40-specific pathway. Plays a role in mitochondrial morphology and in the inheritance of mitochondria. The sequence is that of Mitochondrial distribution and morphology protein 10 from Meyerozyma guilliermondii (strain ATCC 6260 / CBS 566 / DSM 6381 / JCM 1539 / NBRC 10279 / NRRL Y-324) (Yeast).